A 230-amino-acid polypeptide reads, in one-letter code: Heptaprenylglyceryl phosphate synthase (230 aa).

Lysine 12 is a sn-glycerol 1-phosphate binding site. 2 residues coordinate Mg(2+): aspartate 14 and threonine 40. Sn-glycerol 1-phosphate contacts are provided by residues 159 to 164 (YIEYSG), glycine 189, and 209 to 210 (GD).

Belongs to the GGGP/HepGP synthase family. Group I subfamily. In terms of assembly, homodimer. Mg(2+) serves as cofactor.

The enzyme catalyses sn-glycerol 1-phosphate + all-trans-heptaprenyl diphosphate = 3-heptaprenyl-sn-glycero-1-phosphate + diphosphate. Its pathway is membrane lipid metabolism; glycerophospholipid metabolism. In terms of biological role, prenyltransferase that catalyzes in vivo the transfer of the heptaprenyl moiety of heptaprenyl pyrophosphate (HepPP; 35 carbon atoms) to the C3 hydroxyl of sn-glycerol-1-phosphate (G1P), producing heptaprenylglyceryl phosphate (HepGP). This reaction is an ether-bond-formation step in the biosynthesis of archaea-type G1P-based membrane lipids found in Bacillales. The protein is Heptaprenylglyceryl phosphate synthase of Staphylococcus aureus (strain bovine RF122 / ET3-1).